We begin with the raw amino-acid sequence, 255 residues long: NAD kinase (255 aa).

Asp44 functions as the Proton acceptor in the catalytic mechanism. Residues 44–45 (DG), His49, 114–115 (NE), Asp144, Ala152, 155–160 (SAYNLS), and Gln216 each bind NAD(+).

It belongs to the NAD kinase family. It depends on a divalent metal cation as a cofactor.

The protein localises to the cytoplasm. It carries out the reaction NAD(+) + ATP = ADP + NADP(+) + H(+). Its function is as follows. Involved in the regulation of the intracellular balance of NAD and NADP, and is a key enzyme in the biosynthesis of NADP. Catalyzes specifically the phosphorylation on 2'-hydroxyl of the adenosine moiety of NAD to yield NADP. This Rickettsia typhi (strain ATCC VR-144 / Wilmington) protein is NAD kinase.